A 456-amino-acid chain; its full sequence is MYNCAIILAAGEGKRMKSSKPKVLHKICGKEMINVVIDVVKKAQIKDINVVIGKNSEKVKKATEVKNTSYSFQDKQLGTGHAVLCASDFLKNKRGIVAVFTGDSPLIKENTIKNMLDFHEAGGYGATILTSIVQNPFGYGRIIREEDEQVLKIVEHKDCLQEELQVKEINSGMYCFDIESLIESLGKIRNNNAQGEYYLTDVIEILKQEGKKIGALPIPFEETMGVNSRVQLAEAEKIMRNRINKIHMENGVTLIDHNNTYIDLDIQIGKDTIIYPGNVFQGDTVIGENCIFYPNSRIQSSVIKDNVTVENSVVLESTIGENTSVGPFAYIRPETTIGKSVKIGDFVEVKKSTIGDNTKVSHLTYIGDAEVGSKCNFGCGTVVVNYNGKNKNKTLIGNNSFIGCNTNLVSPVKVNDNTYIAAGSTITDEVPEGALAIARARQVNKKSWVYKKGLKK.

A pyrophosphorylase region spans residues 1–229 (MYNCAIILAA…FEETMGVNSR (229 aa)). UDP-N-acetyl-alpha-D-glucosamine contacts are provided by residues 8–11 (LAAG), lysine 22, glutamine 73, and 78–79 (GT). A Mg(2+)-binding site is contributed by aspartate 103. UDP-N-acetyl-alpha-D-glucosamine contacts are provided by glycine 140, glutamate 155, asparagine 170, and asparagine 227. Asparagine 227 is a Mg(2+) binding site. Residues 230 to 250 (VQLAEAEKIMRNRINKIHMEN) form a linker region. Residues 251 to 456 (GVTLIDHNNT…SWVYKKGLKK (206 aa)) are N-acetyltransferase. Residues arginine 332 and lysine 350 each contribute to the UDP-N-acetyl-alpha-D-glucosamine site. The active-site Proton acceptor is histidine 362. Tyrosine 365 and asparagine 376 together coordinate UDP-N-acetyl-alpha-D-glucosamine. Residues 385 to 386 (NY), alanine 422, and arginine 439 contribute to the acetyl-CoA site.

The protein in the N-terminal section; belongs to the N-acetylglucosamine-1-phosphate uridyltransferase family. In the C-terminal section; belongs to the transferase hexapeptide repeat family. In terms of assembly, homotrimer. Mg(2+) serves as cofactor.

Its subcellular location is the cytoplasm. The catalysed reaction is alpha-D-glucosamine 1-phosphate + acetyl-CoA = N-acetyl-alpha-D-glucosamine 1-phosphate + CoA + H(+). It carries out the reaction N-acetyl-alpha-D-glucosamine 1-phosphate + UTP + H(+) = UDP-N-acetyl-alpha-D-glucosamine + diphosphate. It participates in nucleotide-sugar biosynthesis; UDP-N-acetyl-alpha-D-glucosamine biosynthesis; N-acetyl-alpha-D-glucosamine 1-phosphate from alpha-D-glucosamine 6-phosphate (route II): step 2/2. The protein operates within nucleotide-sugar biosynthesis; UDP-N-acetyl-alpha-D-glucosamine biosynthesis; UDP-N-acetyl-alpha-D-glucosamine from N-acetyl-alpha-D-glucosamine 1-phosphate: step 1/1. Its pathway is bacterial outer membrane biogenesis; LPS lipid A biosynthesis. Functionally, catalyzes the last two sequential reactions in the de novo biosynthetic pathway for UDP-N-acetylglucosamine (UDP-GlcNAc). The C-terminal domain catalyzes the transfer of acetyl group from acetyl coenzyme A to glucosamine-1-phosphate (GlcN-1-P) to produce N-acetylglucosamine-1-phosphate (GlcNAc-1-P), which is converted into UDP-GlcNAc by the transfer of uridine 5-monophosphate (from uridine 5-triphosphate), a reaction catalyzed by the N-terminal domain. This Clostridium kluyveri (strain NBRC 12016) protein is Bifunctional protein GlmU.